The chain runs to 249 residues: Neurotrophic factor BDNF precursor form (249 aa).

The first 18 residues, Met1–Ala18, serve as a signal peptide directing secretion. Residues Ala19 to Arg130 constitute a propeptide that is removed on maturation. A glycan (N-linked (GlcNAc...) asparagine) is linked at Asn123. 3 disulfide bridges follow: Cys143–Cys210, Cys188–Cys239, and Cys198–Cys241.

Belongs to the NGF-beta family. In terms of assembly, monomers and homodimers. Binds to NTRK2/TRKB. Can form heterodimers with other neurotrophin family members, such as NTF3 and NTF4 (in vitro), but the physiological relevance of this is not clear. BDNF precursor form: interacts with the heterodimer formed by NGFR and SORCS2. Mature BDNF has much lower affinity for the heterodimer formed by NGFR and SORCS2. N-glycosylated and glycosulfated, contrary to mature BDNF. In terms of processing, mature BDNF is produced by proteolytic removal of the propeptide, catalyzed by a FURIN family member. In addition, the precursor form is proteolytically cleaved within the propeptide, but this is not an obligatory intermediate for the production of mature BDNF. Can be converted into mature BDNF by plasmin (PLG).

Its subcellular location is the secreted. Important signaling molecule that activates signaling cascades downstream of NTRK2. During development, promotes the survival and differentiation of selected neuronal populations of the peripheral and central nervous systems. Participates in axonal growth, pathfinding and in the modulation of dendritic growth and morphology. Major regulator of synaptic transmission and plasticity at adult synapses in many regions of the CNS. The versatility of BDNF is emphasized by its contribution to a range of adaptive neuronal responses including long-term potentiation (LTP), long-term depression (LTD), certain forms of short-term synaptic plasticity, as well as homeostatic regulation of intrinsic neuronal excitability. Its function is as follows. Important signaling molecule that activates signaling cascades downstream of NTRK2. Activates signaling cascades via the heterodimeric receptor formed by NGFR and SORCS2. Signaling via NGFR and SORCS2 plays a role in synaptic plasticity and long-term depression (LTD). Binding to NGFR and SORCS2 promotes neuronal apoptosis. Promotes neuronal growth cone collapse. The protein is Neurotrophic factor BDNF precursor form (Bdnf) of Rattus norvegicus (Rat).